Consider the following 193-residue polypeptide: Xanthine phosphoribosyltransferase (193 aa).

Xanthine is bound by residues L20 and T27. A 5-phospho-alpha-D-ribose 1-diphosphate-binding site is contributed by 128 to 132 (ANGQA). Position 156 (K156) interacts with xanthine.

Belongs to the purine/pyrimidine phosphoribosyltransferase family. Xpt subfamily. As to quaternary structure, homodimer.

Its subcellular location is the cytoplasm. The enzyme catalyses XMP + diphosphate = xanthine + 5-phospho-alpha-D-ribose 1-diphosphate. The protein operates within purine metabolism; XMP biosynthesis via salvage pathway; XMP from xanthine: step 1/1. Functionally, converts the preformed base xanthine, a product of nucleic acid breakdown, to xanthosine 5'-monophosphate (XMP), so it can be reused for RNA or DNA synthesis. In Streptococcus pyogenes serotype M5 (strain Manfredo), this protein is Xanthine phosphoribosyltransferase.